The primary structure comprises 501 residues: Lysine--tRNA ligase (501 aa).

Mg(2+) contacts are provided by glutamate 404 and glutamate 411.

This sequence belongs to the class-II aminoacyl-tRNA synthetase family. In terms of assembly, homodimer. The cofactor is Mg(2+).

It is found in the cytoplasm. The enzyme catalyses tRNA(Lys) + L-lysine + ATP = L-lysyl-tRNA(Lys) + AMP + diphosphate. This chain is Lysine--tRNA ligase (lysS), found in Campylobacter jejuni subsp. jejuni serotype O:2 (strain ATCC 700819 / NCTC 11168).